Here is a 331-residue protein sequence, read N- to C-terminus: Olfactory receptor 10S1 (331 aa).

Residues 1–38 (MTSRSVCEKMTMTTENPNQTVVSHFFLEGLRYTAKHSS) are Extracellular-facing. A glycan (N-linked (GlcNAc...) asparagine) is linked at Asn18. Residues 39 to 59 (LFFLLFLLIYSITVAGNLLIL) traverse the membrane as a helical segment. Over 60–67 (LTVGSDSH) the chain is Cytoplasmic. A helical membrane pass occupies residues 68–88 (LSLPMYHFLGHLSFLDACLST). The Extracellular portion of the chain corresponds to 89–113 (VTVPKVMAGLLTLDGKVISFEGCAV). Cys111 and Cys203 are disulfide-bonded. A helical transmembrane segment spans residues 114 to 134 (QLYCFHFLASTECFLYTVMAY). The Cytoplasmic portion of the chain corresponds to 135–153 (DRYLAICQPLHYPVAMNRR). Residues 154 to 174 (MCAEMAGITWAIGATHAAIHT) traverse the membrane as a helical segment. Residues 175 to 211 (SLTFRLLYCGPCHIAYFFCDIPPVLKLACTDTTINEL) are Extracellular-facing. The helical transmembrane segment at 212–231 (VMLASIGIVAAGCLILIVIS) threads the bilayer. At 232 to 251 (YIFIVAAVLRIRTAQGRQRA) the chain is on the cytoplasmic side. A helical membrane pass occupies residues 252–272 (FSPCTAQLTGVLLYYVPPVCI). Residues 273–283 (YLQPRSSEAGA) are Extracellular-facing. Residues 284–304 (GAPAVFYTIVTPMLNPFIYTL) traverse the membrane as a helical segment. The Cytoplasmic segment spans residues 305-331 (RNKEVKHALQRLLCSSFRESTAGSPPP).

The protein belongs to the G-protein coupled receptor 1 family.

It is found in the cell membrane. In terms of biological role, odorant receptor. The chain is Olfactory receptor 10S1 (OR10S1) from Homo sapiens (Human).